Consider the following 431-residue polypeptide: Putative serine/threonine-protein kinase B (431 aa).

Residues 20-279 enclose the Protein kinase domain; the sequence is YLNKGIVGLG…VRENFQIPYI (260 aa). ATP contacts are provided by residues 26–34 and lysine 49; that span reads VGLGSYGEG. Residue aspartate 147 is the Proton acceptor of the active site. The PH domain occupies 331-429; that stretch reads DVTHRGHVNK…WVHAIQRGIG (99 aa).

The protein belongs to the protein kinase superfamily. Ser/Thr protein kinase family.

It carries out the reaction L-seryl-[protein] + ATP = O-phospho-L-seryl-[protein] + ADP + H(+). The catalysed reaction is L-threonyl-[protein] + ATP = O-phospho-L-threonyl-[protein] + ADP + H(+). This Trypanosoma brucei brucei protein is Putative serine/threonine-protein kinase B (NRKB).